The chain runs to 100 residues: UPF0213 protein YhbQ (100 aa).

A GIY-YIG domain is found at 2 to 77; the sequence is TPWFLYLIRT…KQLTKRQKER (76 aa).

Belongs to the UPF0213 family.

This Escherichia coli (strain K12 / MC4100 / BW2952) protein is UPF0213 protein YhbQ.